Reading from the N-terminus, the 178-residue chain is C-phycoerythrin class 2 subunit beta (178 aa).

Phycourobilin is bound by residues C50 and C61. Residues C82 and C159 each contribute to the (2R,3E)-phycoerythrobilin site.

The protein belongs to the phycobiliprotein family. Heterodimer of an alpha and a beta chain. Contains two covalently linked phycoerythrobilin chromophores and one covalently linked phycourobilin chromophore.

It localises to the cellular thylakoid membrane. Light-harvesting photosynthetic bile pigment-protein from the phycobiliprotein complex. The chain is C-phycoerythrin class 2 subunit beta (mpeB) from Synechococcus sp. (strain WH8103).